A 300-amino-acid polypeptide reads, in one-letter code: UDP-N-acetylenolpyruvoylglucosamine reductase (300 aa).

An FAD-binding PCMH-type domain is found at 28–193 (KTGGPADWLA…LDATFALKLG (166 aa)). The active site involves Arg-172. Ser-222 acts as the Proton donor in catalysis. Glu-292 is an active-site residue.

The protein belongs to the MurB family. Requires FAD as cofactor.

It is found in the cytoplasm. The enzyme catalyses UDP-N-acetyl-alpha-D-muramate + NADP(+) = UDP-N-acetyl-3-O-(1-carboxyvinyl)-alpha-D-glucosamine + NADPH + H(+). It participates in cell wall biogenesis; peptidoglycan biosynthesis. Its function is as follows. Cell wall formation. This is UDP-N-acetylenolpyruvoylglucosamine reductase from Limosilactobacillus fermentum (strain NBRC 3956 / LMG 18251) (Lactobacillus fermentum).